The sequence spans 122 residues: Small ribosomal subunit protein uS13 (122 aa).

Residues Arg93–Lys122 form a disordered region.

The protein belongs to the universal ribosomal protein uS13 family. Part of the 30S ribosomal subunit. Forms a loose heterodimer with protein S19. Forms two bridges to the 50S subunit in the 70S ribosome.

In terms of biological role, located at the top of the head of the 30S subunit, it contacts several helices of the 16S rRNA. In the 70S ribosome it contacts the 23S rRNA (bridge B1a) and protein L5 of the 50S subunit (bridge B1b), connecting the 2 subunits; these bridges are implicated in subunit movement. Contacts the tRNAs in the A and P-sites. This Clostridium botulinum (strain Alaska E43 / Type E3) protein is Small ribosomal subunit protein uS13.